A 139-amino-acid polypeptide reads, in one-letter code: Nuclear receptor 2C2-associated protein (139 aa).

It belongs to the NR2C2AP family. Interacts with NR2C2/TR4. In terms of tissue distribution, expressed in all tissues examined, with highest expression in heart, skeletal muscle and pancreas.

Its subcellular location is the nucleus. Its function is as follows. May act as a repressor of NR2C2-mediated transactivation by suppressing the binding between NR2C2/TR4 and the TR4-response element in target genes. The polypeptide is Nuclear receptor 2C2-associated protein (NR2C2AP) (Homo sapiens (Human)).